Here is a 91-residue protein sequence, read N- to C-terminus: Large ribosomal subunit protein bL31B-1 (91 aa).

The protein belongs to the bacterial ribosomal protein bL31 family. Type B subfamily. In terms of assembly, part of the 50S ribosomal subunit.

In Streptomyces avermitilis (strain ATCC 31267 / DSM 46492 / JCM 5070 / NBRC 14893 / NCIMB 12804 / NRRL 8165 / MA-4680), this protein is Large ribosomal subunit protein bL31B-1.